We begin with the raw amino-acid sequence, 140 residues long: MAFSSGNSGGPMADINVTPLVDVMLVLLIIFIITAPLMSHKVKVELPEANLIQKEDAEKRAAPITLAVKEDGSLYWNDEPISKEALESRLSTAAQQTPQPPLNLRGDRTTKMRTINEITKIAQGQGMLDVGFVATKEKGQ.

The Cytoplasmic portion of the chain corresponds to 1-16 (MAFSSGNSGGPMADIN). The helical transmembrane segment at 17–37 (VTPLVDVMLVLLIIFIITAPL) threads the bilayer. The Periplasmic segment spans residues 38 to 140 (MSHKVKVELP…GFVATKEKGQ (103 aa)).

This sequence belongs to the ExbD/TolR family. In terms of assembly, the accessory proteins ExbB and ExbD seem to form a complex with TonB.

Its subcellular location is the cell inner membrane. In terms of biological role, involved in the TonB-dependent energy-dependent transport of various receptor-bound substrates. This chain is Biopolymer transport protein exbD1 (exbD1), found in Xanthomonas campestris pv. campestris (strain B100).